Here is a 1727-residue protein sequence, read N- to C-terminus: Nucleoporin alm1 (1727 aa).

Coiled coils occupy residues 57-361, 443-463, 542-740, 804-1106, 1223-1427, 1497-1555, and 1601-1664; these read QEVN…KNTS, NFLS…QAEL, IKEA…AEEL, AARK…INES, GERS…QLNK, NEEE…AESA, and QKEW…KKDS. Residues 1423 to 1448 are compositionally biased toward polar residues; the sequence is EQLNKPSATPTATTQSEPSTVSLEEF. 3 disordered regions span residues 1423-1459, 1477-1500, and 1656-1727; these read EQLN…SSTQ, EKVR…NEEE, and LEQS…KKAK. Polar residues-rich tracts occupy residues 1672–1684 and 1702–1714; these read ASKN…SNSE and VDTN…SSSD. Phosphoserine is present on S1706.

It is found in the nucleus. The protein localises to the nuclear pore complex. The protein resides in the nucleus envelope. Its function is as follows. Maintains the proteasome and its anchor cut8 at the nucleus envelope and is required for kinetochore component proteostasis. Proper kinetochore stoichiometry ensures the correct attachment of kinetochores to spindle microtubules during cytokinesis. Required for the localization of spindle assembly checkpoint (SAC) protein mad2 and bub1 to the nucleus envelope during interphase, but not their localization during mitosis. In Schizosaccharomyces pombe (strain 972 / ATCC 24843) (Fission yeast), this protein is Nucleoporin alm1.